We begin with the raw amino-acid sequence, 168 residues long: Small ribosomal subunit protein uS5c (168 aa).

The S5 DRBM domain occupies 17-80 (WQERVVQIRR…SDGKKKIVSV (64 aa)).

The protein belongs to the universal ribosomal protein uS5 family. In terms of assembly, part of the 30S ribosomal subunit. Contacts protein S4.

The protein localises to the plastid. The protein resides in the chloroplast. Functionally, with S4 and S12 plays an important role in translational accuracy. This chain is Small ribosomal subunit protein uS5c (rps5), found in Rhodomonas salina (Cryptomonas salina).